The chain runs to 276 residues: Dermonecrotic toxin LvSicTox-alphaII1 (276 aa).

His-5 is an active-site residue. Mg(2+) contacts are provided by Glu-25 and Asp-27. The Nucleophile role is filled by His-41. 2 disulfide bridges follow: Cys-45–Cys-51 and Cys-47–Cys-193. Asp-85 contacts Mg(2+).

The protein belongs to the arthropod phospholipase D family. Class II subfamily. The cofactor is Mg(2+). Expressed by the venom gland.

It is found in the secreted. It carries out the reaction an N-(acyl)-sphingosylphosphocholine = an N-(acyl)-sphingosyl-1,3-cyclic phosphate + choline. The catalysed reaction is an N-(acyl)-sphingosylphosphoethanolamine = an N-(acyl)-sphingosyl-1,3-cyclic phosphate + ethanolamine. The enzyme catalyses a 1-acyl-sn-glycero-3-phosphocholine = a 1-acyl-sn-glycero-2,3-cyclic phosphate + choline. It catalyses the reaction a 1-acyl-sn-glycero-3-phosphoethanolamine = a 1-acyl-sn-glycero-2,3-cyclic phosphate + ethanolamine. Functionally, dermonecrotic toxins cleave the phosphodiester linkage between the phosphate and headgroup of certain phospholipids (sphingolipid and lysolipid substrates), forming an alcohol (often choline) and a cyclic phosphate. This toxin acts on sphingomyelin (SM). It may also act on ceramide phosphoethanolamine (CPE), lysophosphatidylcholine (LPC) and lysophosphatidylethanolamine (LPE), but not on lysophosphatidylserine (LPS), and lysophosphatidylglycerol (LPG). It acts by transphosphatidylation, releasing exclusively cyclic phosphate products as second products. Induces dermonecrosis, hemolysis, increased vascular permeability, edema, inflammatory response, and platelet aggregation. The polypeptide is Dermonecrotic toxin LvSicTox-alphaII1 (Loxosceles variegata (Recluse spider)).